A 574-amino-acid polypeptide reads, in one-letter code: Cytochrome P450 306a1 (574 aa).

Basic and acidic residues predominate over residues 303-314 (EKEQLRQSKEAD). The disordered stretch occupies residues 303–333 (EKEQLRQSKEADPSQEQSEADEDDEESDEED). Residues 320–333 (SEADEDDEESDEED) are compositionally biased toward acidic residues. C505 is a binding site for heme.

Belongs to the cytochrome P450 family. Heme is required as a cofactor. In terms of tissue distribution, first seen at the early (syncytial) blastoderm stage 4. During cellularization of the blastoderm (stage 5), stripes of expression appear and remain through to stage 10. Expression becomes undetectable during germ band retraction (stages 11-14). By stage 15, some expression resumes in the primordium of the ring gland, so that by stage 17 strong expression is seen, but only in the ring gland. This specific localization continues throughout the larval instars (at protein level). Expressed in the prothoracic gland cells of the larval ring gland (RG). Levels decline just after the molt to the third instar then increase later during the wandering stage. Low levels of expression are seen in the larval brain and fat body. In the adult, majority of expression is restricted to the ovaries, with low levels in the head and carcass of both sexes.

It localises to the endoplasmic reticulum membrane. The protein localises to the microsome membrane. The enzyme catalyses 2,22,25-trideoxyecdysone + 2 reduced [adrenodoxin] + O2 + 2 H(+) = 2,22-dideoxyecdysone + 2 oxidized [adrenodoxin] + H2O. The protein operates within steroid biosynthesis; ecdysteroid biosynthesis. In terms of biological role, involved in the metabolism of insect hormones; responsible for ecdysteroid C25-hydroxylase activity. May be involved in the breakdown of synthetic insecticides. This chain is Cytochrome P450 306a1, found in Drosophila melanogaster (Fruit fly).